A 312-amino-acid chain; its full sequence is Urease accessory protein UreD (312 aa).

Belongs to the UreD family. UreD, UreF and UreG form a complex that acts as a GTP-hydrolysis-dependent molecular chaperone, activating the urease apoprotein by helping to assemble the nickel containing metallocenter of UreC. The UreE protein probably delivers the nickel.

The protein localises to the cytoplasm. Required for maturation of urease via the functional incorporation of the urease nickel metallocenter. The polypeptide is Urease accessory protein UreD (Marinomonas sp. (strain MWYL1)).